An 88-amino-acid chain; its full sequence is UPF0250 protein SO_1163 (88 aa).

It belongs to the UPF0250 family.

The protein is UPF0250 protein SO_1163 of Shewanella oneidensis (strain ATCC 700550 / JCM 31522 / CIP 106686 / LMG 19005 / NCIMB 14063 / MR-1).